The primary structure comprises 209 residues: Methylated-DNA--protein-cysteine methyltransferase (209 aa).

Cysteine 5 is a Zn(2+) binding site. A Phosphoserine modification is found at serine 14. Zn(2+) contacts are provided by cysteine 24, histidine 29, and histidine 89. DNA-binding residues include threonine 99, tyrosine 118, glutamine 119, asparagine 127, and arginine 132. Residue cysteine 149 is the Nucleophile; methyl group acceptor of the active site. Serine 155 serves as a coordination point for DNA.

It belongs to the MGMT family. The cofactor is Zn(2+).

It is found in the nucleus. The catalysed reaction is a 6-O-methyl-2'-deoxyguanosine in DNA + L-cysteinyl-[protein] = S-methyl-L-cysteinyl-[protein] + a 2'-deoxyguanosine in DNA. It catalyses the reaction a 4-O-methyl-thymidine in DNA + L-cysteinyl-[protein] = a thymidine in DNA + S-methyl-L-cysteinyl-[protein]. Functionally, involved in the cellular defense against the biological effects of O6-methylguanine (O6-MeG) and O4-methylthymine (O4-MeT) in DNA. Repairs the methylated nucleobase in DNA by stoichiometrically transferring the methyl group to a cysteine residue in the enzyme. This is a suicide reaction: the enzyme is irreversibly inactivated. The chain is Methylated-DNA--protein-cysteine methyltransferase (Mgmt) from Rattus norvegicus (Rat).